The following is a 232-amino-acid chain: Lipoprotein-releasing system ATP-binding protein LolD (232 aa).

An ABC transporter domain is found at 11–231; sequence VYLHDIKRQY…SIEDGVIVEL (221 aa). 47–54 contacts ATP; sequence APSGSGKS.

Belongs to the ABC transporter superfamily. Lipoprotein translocase (TC 3.A.1.125) family. As to quaternary structure, the complex is composed of two ATP-binding proteins (LolD) and two transmembrane proteins (LolC and LolE).

The protein localises to the cell inner membrane. Part of the ABC transporter complex LolCDE involved in the translocation of mature outer membrane-directed lipoproteins, from the inner membrane to the periplasmic chaperone, LolA. Responsible for the formation of the LolA-lipoprotein complex in an ATP-dependent manner. The polypeptide is Lipoprotein-releasing system ATP-binding protein LolD (Rhodopseudomonas palustris (strain BisB5)).